The sequence spans 205 residues: Ribosome maturation factor RimP (205 aa).

A compositionally biased stretch (polar residues) spans 1–12 (MSNAEAQASSDH). 2 disordered regions span residues 1–24 (MSNAEAQASSDHTAPGKADTAPAH) and 186–205 (FSHLSEDGLEPEHNGPSEEA).

The protein belongs to the RimP family.

The protein resides in the cytoplasm. Required for maturation of 30S ribosomal subunits. This is Ribosome maturation factor RimP from Pseudarthrobacter chlorophenolicus (strain ATCC 700700 / DSM 12829 / CIP 107037 / JCM 12360 / KCTC 9906 / NCIMB 13794 / A6) (Arthrobacter chlorophenolicus).